The primary structure comprises 116 residues: MINVQTVLKVADNSGAVFVSCIRLLNSSSRVGAGVGDTITVVVKKNIIKKNIKKSKEVKKGQVCSAIILRTIKGVKRWGNFFLRSSSNSVALINKYYLPIGSRLLGPVFREIRTNL.

Belongs to the universal ribosomal protein uL14 family.

The protein localises to the mitochondrion. The sequence is that of Large ribosomal subunit protein uL14m (RPL14) from Acanthamoeba polyphaga (Amoeba).